The primary structure comprises 269 residues: GTP cyclohydrolase FolE2 (269 aa).

Belongs to the GTP cyclohydrolase IV family.

The catalysed reaction is GTP + H2O = 7,8-dihydroneopterin 3'-triphosphate + formate + H(+). It participates in cofactor biosynthesis; 7,8-dihydroneopterin triphosphate biosynthesis; 7,8-dihydroneopterin triphosphate from GTP: step 1/1. Functionally, converts GTP to 7,8-dihydroneopterin triphosphate. This Burkholderia ambifaria (strain MC40-6) protein is GTP cyclohydrolase FolE2.